The sequence spans 681 residues: CAI-1 autoinducer sensor kinase/phosphatase CqsS (681 aa).

4 consecutive transmembrane segments (helical) span residues 17 to 37, 73 to 93, 112 to 132, and 148 to 168; these read LVGW…EFMF, AYYQ…MLLM, ILLV…IGLA, and MDWT…LFYF. The Histidine kinase domain occupies 187–413; the sequence is GIAHEMRNPL…QFTMTFPTIG (227 aa). Position 190 is a phosphohistidine; by autocatalysis (H190). The 118-residue stretch at 564-681 folds into the Response regulatory domain; the sequence is TIMVVDDNES…RLFDKIANWI (118 aa). D613 carries the post-translational modification 4-aspartylphosphate.

It is found in the cell membrane. It carries out the reaction ATP + protein L-histidine = ADP + protein N-phospho-L-histidine.. Functionally, senses the quorum-sensing autoinducer CAI-1 ((S)-3-hydroxytridecan-4-one) which probably functions as an intragenus signal. The sensory signal is then relayed to LuxU and LuxO. This Vibrio campbellii (strain ATCC BAA-1116) protein is CAI-1 autoinducer sensor kinase/phosphatase CqsS (cqsS).